A 391-amino-acid chain; its full sequence is MSCTVAIPSSPVFSPSRRPLSCKAASASASPESVSVAASSPAQAAPPAGSPLRPFALRAHLREEATPSPQPSAAAAAAVSAPAGSVLKRRRPAPLVVPVCGGAAAAAAAAAVAAVESDPRNEVEEDGEEFAVYCRRGKGRRRVEMEDRHVAKVALGGDPKVAFFGVFDGHGGKSAAEFVAENMPKFMAEEMCKVDGGDSGETEQAVKRCYLKTDEEFLKREESGGACCVTALLQKGGLVVSNAGDCRAVLSRAGKAEALTSDHRASREDERERIENLGGFVVNYRGTWRVQGSLAVSRGIGDAHLKQWVVSDPDTTTLGVDSQCEFLILASDGLWDKVENQEAVDIARPLYISNDKASRMTACRRLVETAVTRGSTDDISIVIIQLQQFSR.

The disordered stretch occupies residues 1–53 (MSCTVAIPSSPVFSPSRRPLSCKAASASASPESVSVAASSPAQAAPPAGSPLR). Residues 8–51 (PSSPVFSPSRRPLSCKAASASASPESVSVAASSPAQAAPPAGSP) are compositionally biased toward low complexity. Residues 95-115 (LVVPVCGGAAAAAAAAAVAAV) form a helical membrane-spanning segment. One can recognise a PPM-type phosphatase domain in the interval 129–386 (EFAVYCRRGK…DDISIVIIQL (258 aa)). Positions 168, 169, 332, and 377 each coordinate Mn(2+).

This sequence belongs to the PP2C family. Mg(2+) serves as cofactor. It depends on Mn(2+) as a cofactor.

It is found in the membrane. The enzyme catalyses O-phospho-L-seryl-[protein] + H2O = L-seryl-[protein] + phosphate. The catalysed reaction is O-phospho-L-threonyl-[protein] + H2O = L-threonyl-[protein] + phosphate. This Oryza sativa subsp. japonica (Rice) protein is Probable protein phosphatase 2C 32.